A 139-amino-acid chain; its full sequence is Large ribosomal subunit protein uL16 (139 aa).

This sequence belongs to the universal ribosomal protein uL16 family. In terms of assembly, part of the 50S ribosomal subunit.

In terms of biological role, binds 23S rRNA and is also seen to make contacts with the A and possibly P site tRNAs. The sequence is that of Large ribosomal subunit protein uL16 from Treponema pallidum (strain Nichols).